We begin with the raw amino-acid sequence, 202 residues long: Histone chaperone ASF1B (202 aa).

The tract at residues 1 to 155 (MAKVSVLNVA…VTRFHINWDN (155 aa)) is interaction with CHAF1B. The segment at 1–156 (MAKVSVLNVA…TRFHINWDNN (156 aa)) is interaction with histone H3. Ser198 carries the post-translational modification Phosphoserine; by TLK2.

This sequence belongs to the ASF1 family. As to quaternary structure, interacts with histone H3 (via C-terminus), including histone H3.1, H3.2 and H3.3, and histone H4; the interaction with H3 is direct. Interacts with the CHAF1A, CHAF1B and RBBP4 subunits of the CAF-1 complex. Interacts with HAT1, NASP and TAF1. Found in a soluble complex with NASP and histones H3 and H4; the interaction with NASP is probably indirect and mediated by H3-H4. Interacts with CDAN1. Found in a cytosolic complex with IPO4 and histones H3 and H4. Interacts with CREBBP. Post-translationally, phosphorylated by TLK1 and TLK2. As to expression, highly expressed in testis and at lower levels in colon, small intestine and thymus.

Its subcellular location is the nucleus. The protein resides in the cytoplasm. It is found in the cytosol. Functionally, histone chaperone that facilitates histone deposition and histone exchange and removal during nucleosome assembly and disassembly. Cooperates with chromatin assembly factor 1 (CAF-1) to promote replication-dependent chromatin assembly. Also involved in the nuclear import of the histone H3-H4 dimer together with importin-4 (IPO4): specifically recognizes and binds newly synthesized histones with the monomethylation of H3 'Lys-9' (H3K9me1) and diacetylation at 'Lys-5' and 'Lys-12' of H4 (H4K5K12ac) marks in the cytosol. Does not participate in replication-independent nucleosome deposition which is mediated by ASF1A and HIRA. Required for gonad development. The sequence is that of Histone chaperone ASF1B from Homo sapiens (Human).